The following is a 622-amino-acid chain: Probable potassium transport system protein Kup (622 aa).

A run of 12 helical transmembrane segments spans residues 8 to 28, 50 to 70, 103 to 123, 137 to 157, 168 to 188, 203 to 223, 247 to 267, 285 to 305, 337 to 357, 366 to 386, 393 to 413, and 419 to 439; these read LAALTLGAIGVVYGDIGTSVL, ILSIFFWTLTVIVSLKYVVLV, LAVGIFGTSLFYGDGVITPAI, PHFKKYVIPITLVVLFCLFAV, FFGPITLVWFASIALLGLAHI, ALGFMFANPGTSFIILGAVVL, WFGVAMPALTLNYFGQGALLL, ALIPLVVLATMATVIASQALI, IYMPLVNWGLFVAIVLAVVMF, AYGIAVTLDMLITTTLTFFVI, PLALCVAATGCFAVVDLAFFA, and LFQGGWFPLMIGGIVFALMMT.

It belongs to the HAK/KUP transporter (TC 2.A.72) family.

The protein localises to the cell inner membrane. The catalysed reaction is K(+)(in) + H(+)(in) = K(+)(out) + H(+)(out). In terms of biological role, transport of potassium into the cell. Likely operates as a K(+):H(+) symporter. This Verminephrobacter eiseniae (strain EF01-2) protein is Probable potassium transport system protein Kup.